The primary structure comprises 1809 residues: Pyochelin synthetase PchF (1809 aa).

The interval 69–490 (FPLTPVQAAY…GLLRRLAQSP (422 aa)) is condensation/cyclization. Residues 520–915 (FAERALLTPD…GREDDQVKIR (396 aa)) are adenylation. The Carrier domain maps to 1407 to 1488 (APADELENAL…GLAERLRSAP (82 aa)). Ser1442 carries the post-translational modification O-(pantetheine 4'-phosphoryl)serine. Residues 1584-1797 (LGRRYAEALH…FDCLGEALAQ (214 aa)) are thioesterase.

The protein belongs to the NRP synthetase family. Pantetheine 4'-phosphate serves as cofactor.

The catalysed reaction is holo-[peptidyl-carrier protein] + L-cysteine + ATP = L-cysteinyl-[peptidyl-carrier protein] + AMP + diphosphate. The protein operates within siderophore biosynthesis. Involved in the biosynthesis of the siderophore pyochelin. Adenylates L-cysteine and loads it onto its peptidyl carrier domain via a thioester linkage to the phosphopanthetheine moiety. Then forms a peptide bond between the salicyl-thiazolinyl intermediate bound to the second carrier domain of PchE and the cysteine bound to its own peptidyl carrier domain to form the salicyl-thiazolinyl-cysteinyl-S-PCP2 intermediate. It subsequently cyclizes the C-terminal cysteine to form the second thiazoline heterocycle in the salicyl-thiazolinyl-thiazolinyl-S-PCP2 intermediate. When this intermediate is released by the action of a thioesterase, it produces the tricyclic acid hydroxyphenyl-thiazolyl-thiazolinyl-carboxylic acid (HPTT-COOH), an advanced intermediate containing the aryl-4,2-bis-heterocyclic skeleton of the bithiazoline class of siderophores. The sequence is that of Pyochelin synthetase PchF from Pseudomonas aeruginosa (strain ATCC 15692 / DSM 22644 / CIP 104116 / JCM 14847 / LMG 12228 / 1C / PRS 101 / PAO1).